Consider the following 253-residue polypeptide: Phosphoadenosine 5'-phosphosulfate reductase (253 aa).

Cys239 functions as the Nucleophile; cysteine thiosulfonate intermediate in the catalytic mechanism.

This sequence belongs to the PAPS reductase family. CysH subfamily.

It localises to the cytoplasm. The enzyme catalyses [thioredoxin]-disulfide + sulfite + adenosine 3',5'-bisphosphate + 2 H(+) = [thioredoxin]-dithiol + 3'-phosphoadenylyl sulfate. It participates in sulfur metabolism; hydrogen sulfide biosynthesis; sulfite from sulfate: step 3/3. Its function is as follows. Catalyzes the formation of sulfite from phosphoadenosine 5'-phosphosulfate (PAPS) using thioredoxin as an electron donor. The sequence is that of Phosphoadenosine 5'-phosphosulfate reductase from Aliivibrio fischeri (strain MJ11) (Vibrio fischeri).